Here is a 131-residue protein sequence, read N- to C-terminus: Small ribosomal subunit protein uS8 (131 aa).

It belongs to the universal ribosomal protein uS8 family. In terms of assembly, part of the 30S ribosomal subunit. Contacts proteins S5 and S12.

Functionally, one of the primary rRNA binding proteins, it binds directly to 16S rRNA central domain where it helps coordinate assembly of the platform of the 30S subunit. This Mycoplasmopsis agalactiae (strain NCTC 10123 / CIP 59.7 / PG2) (Mycoplasma agalactiae) protein is Small ribosomal subunit protein uS8.